The sequence spans 262 residues: ATP synthase subunit a (262 aa).

The next 5 helical transmembrane spans lie at 24 to 44, 84 to 104, 129 to 149, 194 to 214, and 228 to 248; these read AVHL…LFVF, VIAP…AIDL, DISA…FYTV, LFGN…MYMA, and LVWA…FMML.

The protein belongs to the ATPase A chain family. F-type ATPases have 2 components, CF(1) - the catalytic core - and CF(0) - the membrane proton channel. CF(1) has five subunits: alpha(3), beta(3), gamma(1), delta(1), epsilon(1). CF(0) has three main subunits: a(1), b(2) and c(9-12). The alpha and beta chains form an alternating ring which encloses part of the gamma chain. CF(1) is attached to CF(0) by a central stalk formed by the gamma and epsilon chains, while a peripheral stalk is formed by the delta and b chains.

Its subcellular location is the cell inner membrane. Functionally, key component of the proton channel; it plays a direct role in the translocation of protons across the membrane. This is ATP synthase subunit a from Actinobacillus pleuropneumoniae serotype 3 (strain JL03).